The sequence spans 152 residues: Superoxide dismutase [Cu-Zn] (152 aa).

Cu cation is bound by residues H45, H47, and H62. The cysteines at positions 56 and 145 are disulfide-linked. Zn(2+)-binding residues include H62, H70, H79, and D82. Residue H119 participates in Cu cation binding.

This sequence belongs to the Cu-Zn superoxide dismutase family. As to quaternary structure, homodimer. It depends on Cu cation as a cofactor. Requires Zn(2+) as cofactor.

It is found in the cytoplasm. The catalysed reaction is 2 superoxide + 2 H(+) = H2O2 + O2. Destroys radicals which are normally produced within the cells and which are toxic to biological systems. In Spinacia oleracea (Spinach), this protein is Superoxide dismutase [Cu-Zn] (SODCC).